Here is a 1823-residue protein sequence, read N- to C-terminus: Vitellogenin (1823 aa).

The first 14 residues, 1–14, serve as a signal peptide directing secretion; that stretch reads MWKLLLVALAFALA. Glutamine 17 bears the Pyrrolidone carboxylic acid mark. A Vitellogenin domain is found at 18–658; that stretch reads FQPGKVYRYS…SPSGPLPRAV (641 aa). The segment at 953–986 is disordered; sequence KGLISQQQQQPHHQQQPHQHGQDQARAAYQRPWA. Over residues 958–976 the composition is skewed to low complexity; it reads QQQQQPHHQQQPHQHGQDQ. Asparagine 1097 carries N-linked (GlcNAc...) asparagine glycosylation. The tract at residues 1119–1289 is disordered; the sequence is SDKDKDAKKP…SSSSSESKSL (171 aa). Composition is skewed to low complexity over residues 1128 to 1149 and 1178 to 1192; these read PPGSSSSSSSSSSSSSSSSSSD and SSSSSSSSSSSSDSS. Positions 1194–1206 are enriched in basic residues; it reads SPHKHGGAKRQHA. Low complexity-rich tracts occupy residues 1217-1238 and 1253-1286; these read SHSSSSSSSSSSSSSSASKSFS and SSSSSSSSDSSSSSSSSSSSSSSSSSSSSSSSES. N-linked (GlcNAc...) asparagine glycosylation is present at asparagine 1298. The interval 1308 to 1351 is disordered; it reads VPQRKPQTSRRHTPASSSSSSSSSSSSSSSSSSSDSDMTVSAES. The segment covering 1323 to 1344 has biased composition (low complexity); sequence SSSSSSSSSSSSSSSSSSSDSD. The region spanning 1564–1732 is the VWFD domain; the sequence is SACELNEQSL…SWIAPDETCG (169 aa). Intrachain disulfides connect cysteine 1566-cysteine 1695 and cysteine 1589-cysteine 1731. N-linked (GlcNAc...) asparagine glycosylation is present at asparagine 1675.

In terms of processing, what corresponds to phosvitin in other species is lost during maturation of vitellogenin to lipovitellin. Produced by the liver, secreted into the blood and then sequestered by receptor mediated endocytosis into growing oocytes, where it is generally cleaved, giving rise to the respective yolk components lipovitellins 1 and 2.

Its function is as follows. Precursor of the major egg-yolk proteins that are sources of nutrients during early development of oviparous organisms. This Ichthyomyzon unicuspis (Silver lamprey) protein is Vitellogenin.